We begin with the raw amino-acid sequence, 369 residues long: tRNA/tmRNA (uracil-C(5))-methyltransferase (369 aa).

S-adenosyl-L-methionine-binding residues include Gln-190, Tyr-218, Asn-223, Glu-239, and Asp-301. Cys-326 (nucleophile) is an active-site residue. Glu-360 acts as the Proton acceptor in catalysis.

The protein belongs to the class I-like SAM-binding methyltransferase superfamily. RNA M5U methyltransferase family. TrmA subfamily.

It carries out the reaction uridine(54) in tRNA + S-adenosyl-L-methionine = 5-methyluridine(54) in tRNA + S-adenosyl-L-homocysteine + H(+). The enzyme catalyses uridine(341) in tmRNA + S-adenosyl-L-methionine = 5-methyluridine(341) in tmRNA + S-adenosyl-L-homocysteine + H(+). In terms of biological role, dual-specificity methyltransferase that catalyzes the formation of 5-methyluridine at position 54 (m5U54) in all tRNAs, and that of position 341 (m5U341) in tmRNA (transfer-mRNA). The protein is tRNA/tmRNA (uracil-C(5))-methyltransferase of Vibrio parahaemolyticus serotype O3:K6 (strain RIMD 2210633).